The sequence spans 145 residues: NADH-quinone oxidoreductase subunit A (145 aa).

Helical transmembrane passes span 14–34, 66–86, and 96–116; these read FAVF…GGFL, FYLV…LYAW, and VGFI…VYLV.

This sequence belongs to the complex I subunit 3 family. As to quaternary structure, NDH-1 is composed of 13 different subunits. Subunits NuoA, H, J, K, L, M, N constitute the membrane sector of the complex.

It localises to the cell inner membrane. The enzyme catalyses a quinone + NADH + 5 H(+)(in) = a quinol + NAD(+) + 4 H(+)(out). NDH-1 shuttles electrons from NADH, via FMN and iron-sulfur (Fe-S) centers, to quinones in the respiratory chain. The immediate electron acceptor for the enzyme in this species is believed to be ubiquinone. Couples the redox reaction to proton translocation (for every two electrons transferred, four hydrogen ions are translocated across the cytoplasmic membrane), and thus conserves the redox energy in a proton gradient. This chain is NADH-quinone oxidoreductase subunit A, found in Sodalis glossinidius (strain morsitans).